The following is a 275-amino-acid chain: Putative protein A464R (275 aa).

The region spanning 51 to 175 (KEDVEYLIGM…LMGAIYFDLG (125 aa)) is the RNase III domain. Residues 201 to 269 (NYKDRLLKHT…SKIALHTMGV (69 aa)) enclose the DRBM domain.

It belongs to the ribonuclease III family.

The polypeptide is Putative protein A464R (Chlorella (PBCV-1)).